The sequence spans 278 residues: NAD-capped RNA hydrolase NudC (278 aa).

R84 contributes to the substrate binding site. Zn(2+)-binding residues include C114 and C117. Residue E127 coordinates substrate. C132 is a Zn(2+) binding site. Y140 provides a ligand contact to substrate. A Nudix hydrolase domain is found at 141–264; sequence PRISPSMIVL…SIARYLIEAY (124 aa). 3 residues coordinate a divalent metal cation: A174, E190, and E194. Positions 175–196 match the Nudix box motif; sequence GFVEPGESAEDCVHREVMEEVQ. Residue 208–215 coordinates substrate; it reads QCWPFPHS. E235 is a binding site for a divalent metal cation. Position 257 (A257) interacts with substrate.

It belongs to the Nudix hydrolase family. NudC subfamily. As to quaternary structure, homodimer. It depends on Mg(2+) as a cofactor. Requires Mn(2+) as cofactor. Zn(2+) is required as a cofactor.

It carries out the reaction a 5'-end NAD(+)-phospho-ribonucleoside in mRNA + H2O = a 5'-end phospho-adenosine-phospho-ribonucleoside in mRNA + beta-nicotinamide D-ribonucleotide + 2 H(+). It catalyses the reaction NAD(+) + H2O = beta-nicotinamide D-ribonucleotide + AMP + 2 H(+). The enzyme catalyses NADH + H2O = reduced beta-nicotinamide D-ribonucleotide + AMP + 2 H(+). MRNA decapping enzyme that specifically removes the nicotinamide adenine dinucleotide (NAD) cap from a subset of mRNAs by hydrolyzing the diphosphate linkage to produce nicotinamide mononucleotide (NMN) and 5' monophosphate mRNA. The NAD-cap is present at the 5'-end of some mRNAs and stabilizes RNA against 5'-processing. Has preference for mRNAs with a 5'-end purine. Catalyzes the hydrolysis of a broad range of dinucleotide pyrophosphates. In Pseudomonas syringae pv. tomato (strain ATCC BAA-871 / DC3000), this protein is NAD-capped RNA hydrolase NudC.